The sequence spans 629 residues: Putative polypeptide N-acetylgalactosaminyltransferase 10 (629 aa).

Residues 1 to 12 (MGLSRYLSRRHH) lie on the Cytoplasmic side of the membrane. A helical; Signal-anchor for type II membrane protein transmembrane segment spans residues 13–33 (WVIQYCALLLFLYFIYSYVAV). At 34–629 (SNDAPRLNEE…RQANEHKELE (596 aa)) the chain is on the lumenal side. N-linked (GlcNAc...) asparagine glycans are attached at residues Asn-143 and Asn-177. 5 disulfide bridges follow: Cys-154/Cys-385, Cys-376/Cys-454, Cys-493/Cys-510, Cys-539/Cys-556, and Cys-582/Cys-598. A catalytic subdomain A region spans residues 163–275 (LPTVSVIFPF…YNWLPPLLDP (113 aa)). Substrate-binding residues include Asp-204 and Arg-236. 2 residues coordinate Mn(2+): Asp-259 and His-261. The segment at 331 to 393 (PFDSPVMAGG…PCSRVAHIYR (63 aa)) is catalytic subdomain B. Position 362 (Trp-362) interacts with substrate. Mn(2+) is bound at residue His-390. Arg-393 provides a ligand contact to substrate. Residues 393 to 406 (RCKYAPFKNAGMGD) are flexible loop. The region spanning 526–629 (TRWHDIRPKG…RQANEHKELE (104 aa)) is the Ricin B-type lectin domain.

The protein belongs to the glycosyltransferase 2 family. GalNAc-T subfamily. Mn(2+) serves as cofactor.

Its subcellular location is the golgi apparatus membrane. It catalyses the reaction L-seryl-[protein] + UDP-N-acetyl-alpha-D-galactosamine = a 3-O-[N-acetyl-alpha-D-galactosaminyl]-L-seryl-[protein] + UDP + H(+). The enzyme catalyses L-threonyl-[protein] + UDP-N-acetyl-alpha-D-galactosamine = a 3-O-[N-acetyl-alpha-D-galactosaminyl]-L-threonyl-[protein] + UDP + H(+). It participates in protein modification; protein glycosylation. In terms of biological role, may catalyze the initial reaction in O-linked oligosaccharide biosynthesis, the transfer of an N-acetyl-D-galactosamine residue to a serine or threonine residue on the protein receptor. In Caenorhabditis briggsae, this protein is Putative polypeptide N-acetylgalactosaminyltransferase 10.